An 89-amino-acid chain; its full sequence is MSLDKGTKEEITKKFQLHEKDTGSADVQIAILTEHITELKQHLKRSPKDQNSRLALLKLVGQRRKLLEYLNSTDTERYKNLITRLNLRK.

The protein belongs to the universal ribosomal protein uS15 family. In terms of assembly, part of the 30S ribosomal subunit. Forms a bridge to the 50S subunit in the 70S ribosome, contacting the 23S rRNA.

Functionally, one of the primary rRNA binding proteins, it binds directly to 16S rRNA where it helps nucleate assembly of the platform of the 30S subunit by binding and bridging several RNA helices of the 16S rRNA. In terms of biological role, forms an intersubunit bridge (bridge B4) with the 23S rRNA of the 50S subunit in the ribosome. This Chlamydia felis (strain Fe/C-56) (Chlamydophila felis) protein is Small ribosomal subunit protein uS15.